The following is a 213-amino-acid chain: uncharacterized protein (213 aa).

G53, E74, and D97 together coordinate S-adenosyl-L-methionine.

Belongs to the methyltransferase superfamily. YrrT family.

Its function is as follows. Could be a S-adenosyl-L-methionine-dependent methyltransferase. This is an uncharacterized protein from Geobacillus sp. (strain WCH70).